A 441-amino-acid chain; its full sequence is Mitochondrial distribution and morphology protein 12 (441 aa).

An SMP-LTD domain is found at 1–441 (MSIDIDWERA…VYPSFWTFLV (441 aa)). The interval 180 to 289 (TPLRAVTRGN…SGTPPRRMRE (110 aa)) is disordered. Composition is skewed to polar residues over residues 226–245 (SRPS…SVST) and 253–263 (SSQTVLANNPG).

The protein belongs to the MDM12 family. In terms of assembly, component of the ER-mitochondria encounter structure (ERMES) or MDM complex, composed of MMM1, MDM10, MDM12 and MDM34. An MMM1 homodimer associates with one molecule of MDM12 on each side in a pairwise head-to-tail manner, and the SMP-LTD domains of MMM1 and MDM12 generate a continuous hydrophobic tunnel for phospholipid trafficking.

Its subcellular location is the mitochondrion outer membrane. The protein localises to the endoplasmic reticulum membrane. Functionally, component of the ERMES/MDM complex, which serves as a molecular tether to connect the endoplasmic reticulum (ER) and mitochondria. Components of this complex are involved in the control of mitochondrial shape and protein biogenesis, and function in nonvesicular lipid trafficking between the ER and mitochondria. MDM12 is required for the interaction of the ER-resident membrane protein MMM1 and the outer mitochondrial membrane-resident beta-barrel protein MDM10. The MDM12-MMM1 subcomplex functions in the major beta-barrel assembly pathway that is responsible for biogenesis of all mitochondrial outer membrane beta-barrel proteins, and acts in a late step after the SAM complex. The MDM10-MDM12-MMM1 subcomplex further acts in the TOM40-specific pathway after the action of the MDM12-MMM1 complex. Essential for establishing and maintaining the structure of mitochondria and maintenance of mtDNA nucleoids. The polypeptide is Mitochondrial distribution and morphology protein 12 (Paracoccidioides brasiliensis (strain Pb18)).